The following is a 58-amino-acid chain: Large ribosomal subunit protein uL30 (58 aa).

This sequence belongs to the universal ribosomal protein uL30 family. Part of the 50S ribosomal subunit.

The protein is Large ribosomal subunit protein uL30 of Porphyromonas gingivalis (strain ATCC 33277 / DSM 20709 / CIP 103683 / JCM 12257 / NCTC 11834 / 2561).